Here is a 508-residue protein sequence, read N- to C-terminus: Ankyrin repeat domain-containing protein 34B (508 aa).

ANK repeat units lie at residues 9–38 (TDGN…YINE), 42–79 (RGET…DPNI), 83–113 (SGKS…DLSL), and 117–146 (SGYS…AKGK). Positions 157–185 (PSGRHTTQHHLNMPPADMDGSHPPATPSE) are disordered. The residue at position 260 (S260) is a Phosphoserine. T269 carries the phosphothreonine modification. Phosphoserine is present on S293. Residues 361-370 (GANHYSSDSQ) are compositionally biased toward polar residues. Residues 361-380 (GANHYSSDSQLAEGVTPPTV) are disordered.

Belongs to the ANKRD34 family. Phosphorylated. In terms of tissue distribution, specifically and constitutively expressed in brain (at protein level).

It is found in the cytoplasm. It localises to the nucleus. This chain is Ankyrin repeat domain-containing protein 34B (Ankrd34b), found in Mus musculus (Mouse).